A 490-amino-acid polypeptide reads, in one-letter code: MVPVVALVGRPNVGKSTLFNRLTRTRDALVADFPGLTRDRKYGRAEVEGREFICIDTGGIDGTEDGVETRMAEQSLLAIEEADVVLFMVDARAGLMPADEAIAKHLRSREKPTFLVANKTDGLDPDQAVVDFYSLGLGEIYPIAASHGRGVLSLLEHVLLPWMDDVAPQEEVDEDAEYWAQFEVEQNGEEAPEDDFDPQSLPIKLAIVGRPNVGKSTLTNRILGEERVVVYDMPGTTRDSIYIPMERDEREYVLIDTAGVRKRGKITDAVEKFSVIKTLQAIEDANVVLLVIDAREGISDQDLSLLGFILNSGRSLVIVVNKWDGLSQEVKEQVKETLDFRLGFIDFARVHFISALHGSDVGNLFESVREAYDSSTRRVSTAMLTRIMTMAVEDHQPPLVRGRRVKLKYAHAGGYNPPIVVIHGNQVKDLPDSYKRYLMNYFRKSLEVMGTPIRIQFKEGENPYANKRNTLTPTQMRKRKRLMKHIKKSK.

2 consecutive EngA-type G domains span residues 3 to 166 (PVVA…MDDV) and 203 to 376 (IKLA…DSST). Residues 9–16 (GRPNVGKS), 56–60 (DTGGI), 118–121 (NKTD), 209–216 (GRPNVGKS), 256–260 (DTAGV), and 321–324 (NKWD) each bind GTP. One can recognise a KH-like domain in the interval 377 to 461 (RRVSTAMLTR…PIRIQFKEGE (85 aa)).

Belongs to the TRAFAC class TrmE-Era-EngA-EngB-Septin-like GTPase superfamily. EngA (Der) GTPase family. In terms of assembly, associates with the 50S ribosomal subunit.

GTPase that plays an essential role in the late steps of ribosome biogenesis. This is GTPase Der from Salmonella gallinarum (strain 287/91 / NCTC 13346).